Here is a 584-residue protein sequence, read N- to C-terminus: Protein phosphatase 2A scaffold subunit (584 aa).

HEAT repeat units lie at residues Glu-7–Pro-45, Glu-46–Gly-84, Glu-86–Thr-123, Leu-168–Glu-206, Ile-207–Asn-239, Glu-240–Thr-278, Glu-279–Lys-317, Glu-318–Lys-356, Asp-358–Ile-395, Met-397–Val-434, Leu-441–Asn-479, Ile-480–Gly-512, Asp-513–Ser-551, and Ile-553–Cys-584.

This sequence belongs to the phosphatase 2A regulatory subunit A family. In terms of assembly, component of the Sca1 complex composed of at least gefA, gefH, scaA, phr, and the protein phosphatase 2A subunits pppA and pho2B.

It is found in the cytoplasm. Its subcellular location is the cytosol. The protein localises to the cell membrane. In terms of biological role, scaffolding molecule which may coordinate the assembly of the catalytic subunit and a variable regulatory B subunit. Component of the Sca1 complex, a regulator of cell motility, chemotaxis and signal relay. The Sca1 complex is recruited to the plasma membrane in a chemoattractant- and F-actin-dependent manner and is enriched at the leading edge of chemotaxing cells where it regulates F-actin dynamics and signal relay by controlling the activation of rasC and the downstream target of rapamycin complex 2 (TORC2)-Akt/protein kinase B (PKB) pathway. The protein is Protein phosphatase 2A scaffold subunit (pppA) of Dictyostelium discoideum (Social amoeba).